Reading from the N-terminus, the 64-residue chain is Small ribosomal subunit protein bS21 (64 aa).

This sequence belongs to the bacterial ribosomal protein bS21 family.

The polypeptide is Small ribosomal subunit protein bS21 (Oenococcus oeni (strain ATCC BAA-331 / PSU-1)).